Reading from the N-terminus, the 25-residue chain is Aurein-5.2 (25 aa).

In terms of tissue distribution, expressed by the skin dorsal glands.

It is found in the secreted. In terms of biological role, has antimicrobial activity against L.lactis and S.uberis. This is Aurein-5.2 from Ranoidea raniformis (Southern bell frog).